Here is a 155-residue protein sequence, read N- to C-terminus: Protein FAM163B (155 aa).

A helical membrane pass occupies residues 6 to 26 (VVITGGILATVILLCIIAVLC).

Belongs to the FAM163 family.

The protein localises to the membrane. The sequence is that of Protein FAM163B (fam163b) from Xenopus tropicalis (Western clawed frog).